Reading from the N-terminus, the 157-residue chain is Urease accessory protein UreE (157 aa).

This sequence belongs to the UreE family.

Its subcellular location is the cytoplasm. Its function is as follows. Involved in urease metallocenter assembly. Binds nickel. Probably functions as a nickel donor during metallocenter assembly. This is Urease accessory protein UreE from Corynebacterium glutamicum (strain R).